A 606-amino-acid chain; its full sequence is Radial spoke head protein 3 homolog (606 aa).

Residues 1 to 103 (MARSEARRQA…NSPEAPPLDG (103 aa)) are disordered. The segment covering 15 to 46 (PRAVPEERALRERRQPRPRREPLESGAGDHRR) has biased composition (basic and acidic residues). At T331 the chain carries Phosphothreonine; by MAPK1. Residues 393–429 (AYEELRNIELAEVQRLEEQERRHREEKERRKQQQWQV) are a coiled coil. Residues 520-606 (EGRHASVRPE…KSSKREELSQ (87 aa)) form a disordered region. Residues 547–556 (SQDQGASQAQ) are compositionally biased toward polar residues. Residues 572–604 (ARYAERVSSQERRLAEENDELTEMRKSSKREEL) are a coiled coil. The span at 573–606 (RYAERVSSQERRLAEENDELTEMRKSSKREELSQ) shows a compositional bias: basic and acidic residues.

The protein belongs to the flagellar radial spoke RSP3 family. Component of the axonemal radial spoke 1 (RS1) and 2 (RS2) complexes, at least composed of spoke head proteins RSPH1, RSPH3, RSPH9 and the cilia-specific component RSPH4A or sperm-specific component RSPH6A, spoke stalk proteins RSPH14, DNAJB13, DYDC1, ROPN1L and NME5, and the RS1 complex-specific anchor protein IQUB. Interacts with IQUB. Interacts with phosphorylated MAPK1. Interacts with MEK1. Interacts with PKA regulatory subunits PRKAR1A and PRKAR1B. Interacts with RSPH1. Interacts with RSPH4A. Interacts with RSPH6A. Interacts with RSPH9. Interacts with LRRC23.

The protein localises to the cytoplasm. The protein resides in the cytoskeleton. Its subcellular location is the cilium axoneme. It is found in the flagellum axoneme. Functionally, functions as part of axonemal radial spoke complexes that play an important part in the motility of sperm and cilia. Functions as a protein kinase A-anchoring protein that scaffolds the cAMP-dependent protein kinase holoenzyme. May serve as a point of convergence for MAPK and PKA signaling in cilia. The protein is Radial spoke head protein 3 homolog (RSPH3) of Bos taurus (Bovine).